We begin with the raw amino-acid sequence, 107 residues long: Large ribosomal subunit protein bL21 (107 aa).

It belongs to the bacterial ribosomal protein bL21 family. Part of the 50S ribosomal subunit. Contacts protein L20.

In terms of biological role, this protein binds to 23S rRNA in the presence of protein L20. This Chlamydia trachomatis serovar L2 (strain ATCC VR-902B / DSM 19102 / 434/Bu) protein is Large ribosomal subunit protein bL21.